A 288-amino-acid polypeptide reads, in one-letter code: Bifunctional protein FolD (288 aa).

NADP(+)-binding positions include 164–166 and Val-230; that span reads GRS.

It belongs to the tetrahydrofolate dehydrogenase/cyclohydrolase family. Homodimer.

It catalyses the reaction (6R)-5,10-methylene-5,6,7,8-tetrahydrofolate + NADP(+) = (6R)-5,10-methenyltetrahydrofolate + NADPH. The enzyme catalyses (6R)-5,10-methenyltetrahydrofolate + H2O = (6R)-10-formyltetrahydrofolate + H(+). Its pathway is one-carbon metabolism; tetrahydrofolate interconversion. In terms of biological role, catalyzes the oxidation of 5,10-methylenetetrahydrofolate to 5,10-methenyltetrahydrofolate and then the hydrolysis of 5,10-methenyltetrahydrofolate to 10-formyltetrahydrofolate. The chain is Bifunctional protein FolD from Thermomicrobium roseum (strain ATCC 27502 / DSM 5159 / P-2).